Here is a 171-residue protein sequence, read N- to C-terminus: UPF0763 protein HPP12_0677 (171 aa).

This sequence belongs to the UPF0763 family.

The polypeptide is UPF0763 protein HPP12_0677 (Helicobacter pylori (strain P12)).